Consider the following 312-residue polypeptide: Eukaryotic translation initiation factor 2 subunit 2 (312 aa).

Disordered regions lie at residues 26 to 104 (AALG…NLDM) and 125 to 146 (ADQADDDKSEDKENDEDNSSTW). Ser44 is subject to Phosphoserine. 2 stretches are compositionally biased toward acidic residues: residues 90–102 (AASEEPEEEEINL) and 125–142 (ADQADDDKSEDKENDEDN). Position 133 is a phosphoserine (Ser133). Position 145 is a phosphothreonine (Thr145). Residues 260–284 (CHTCRSPETILQKDTRLFFLQCESC) form a C4-type zinc finger.

This sequence belongs to the eIF-2-beta/eIF-5 family. In terms of assembly, eukaryotic translation initiation factor 2 eIF2 is a heterotrimeric complex composed of an alpha, a beta and a gamma subunit.

It is found in the cytoplasm. The protein resides in the cytosol. Component of the eIF2 complex that functions in the early steps of protein synthesis by forming a ternary complex with GTP and initiator tRNA. This complex binds to a 40S ribosomal subunit, followed by mRNA binding to form a 43S pre-initiation complex (43S PIC). Junction of the 60S ribosomal subunit to form the 80S initiation complex is preceded by hydrolysis of the GTP bound to eIF2 and release of an eIF2-GDP binary complex. In order for eIF2 to recycle and catalyze another round of initiation, the GDP bound to eIF2 must exchange with GTP by way of a reaction catalyzed by eIF2B. The protein is Eukaryotic translation initiation factor 2 subunit 2 of Drosophila melanogaster (Fruit fly).